Here is a 787-residue protein sequence, read N- to C-terminus: Phenylalanine--tRNA ligase beta subunit (787 aa).

The tRNA-binding domain maps to 39-149; the sequence is APAFSGVVVA…EDAPVGTNIR (111 aa). Positions 400 to 475 constitute a B5 domain; that stretch reads PEAKQVGLRL…RVYGYENIPD (76 aa). Mg(2+)-binding residues include aspartate 453, aspartate 459, glutamate 462, and glutamate 463. The 93-residue stretch at 694–786 folds into the FDX-ACB domain; the sequence is SKFQPVRRDL…VATEAGARLR (93 aa).

It belongs to the phenylalanyl-tRNA synthetase beta subunit family. Type 1 subfamily. As to quaternary structure, tetramer of two alpha and two beta subunits. Requires Mg(2+) as cofactor.

It localises to the cytoplasm. It carries out the reaction tRNA(Phe) + L-phenylalanine + ATP = L-phenylalanyl-tRNA(Phe) + AMP + diphosphate + H(+). This Neisseria gonorrhoeae (strain ATCC 700825 / FA 1090) protein is Phenylalanine--tRNA ligase beta subunit.